The sequence spans 272 residues: Acyl-[acyl-carrier-protein]--UDP-N-acetylglucosamine O-acyltransferase (272 aa).

Belongs to the transferase hexapeptide repeat family. LpxA subfamily. As to quaternary structure, homotrimer.

Its subcellular location is the cytoplasm. It carries out the reaction a (3R)-hydroxyacyl-[ACP] + UDP-N-acetyl-alpha-D-glucosamine = a UDP-3-O-[(3R)-3-hydroxyacyl]-N-acetyl-alpha-D-glucosamine + holo-[ACP]. It functions in the pathway glycolipid biosynthesis; lipid IV(A) biosynthesis; lipid IV(A) from (3R)-3-hydroxytetradecanoyl-[acyl-carrier-protein] and UDP-N-acetyl-alpha-D-glucosamine: step 1/6. Involved in the biosynthesis of lipid A, a phosphorylated glycolipid that anchors the lipopolysaccharide to the outer membrane of the cell. The sequence is that of Acyl-[acyl-carrier-protein]--UDP-N-acetylglucosamine O-acyltransferase from Rhizobium johnstonii (strain DSM 114642 / LMG 32736 / 3841) (Rhizobium leguminosarum bv. viciae).